The chain runs to 410 residues: 2-oxoisovalerate dehydrogenase subunit alpha (410 aa).

Belongs to the BCKDHA family. Heterodimer of an alpha and a beta chain. Requires thiamine diphosphate as cofactor.

The enzyme catalyses N(6)-[(R)-lipoyl]-L-lysyl-[protein] + 3-methyl-2-oxobutanoate + H(+) = N(6)-[(R)-S(8)-2-methylpropanoyldihydrolipoyl]-L-lysyl-[protein] + CO2. In terms of biological role, the branched-chain alpha-keto dehydrogenase complex catalyzes the overall conversion of alpha-keto acids to acyl-CoA and CO(2). It contains multiple copies of three enzymatic components: branched-chain alpha-keto acid decarboxylase (E1), lipoamide acyltransferase (E2) and lipoamide dehydrogenase (E3). This chain is 2-oxoisovalerate dehydrogenase subunit alpha (bkdA1), found in Pseudomonas putida (Arthrobacter siderocapsulatus).